The primary structure comprises 75 residues: Dermaseptin-A3 (75 aa).

Residues 1–22 (MAFLKKSLFLVLLLGLISLSIC) form the signal peptide. The propeptide occupies 23–43 (EEEKRENEVEEEQEDDEQSEL). Glutamine 72 bears the Glutamine amide mark. Residues 74 to 75 (EQ) constitute a propeptide that is removed on maturation.

It belongs to the frog skin active peptide (FSAP) family. Dermaseptin subfamily. As to expression, expressed by the skin glands.

The protein localises to the secreted. In terms of biological role, possesses a potent antimicrobial activity against Gram-positive and Gram-negative bacteria. Probably acts by disturbing membrane functions with its amphipathic structure. This chain is Dermaseptin-A3, found in Agalychnis annae (Blue-sided leaf frog).